Consider the following 1034-residue polypeptide: DNA polymerase I B, chloroplastic/mitochondrial (1034 aa).

The N-terminal 55 residues, 1–55 (MGVSLRHLSPSSFWVSRRPRVSSSILSFLVPRRRILCTRKVAIIKGNAGYSTATD), are a transit peptide targeting the chloroplast and mitochondrion. Positions 270–468 (ACDTEVSRID…LYESMKKQLQ (199 aa)) constitute a 3'-5' exonuclease domain. The tract at residues 700–1030 (HAIAALCEVC…SVDAKCAQNW (331 aa)) is polymerase.

The protein belongs to the DNA polymerase type-A family. Expressed in shoot apical meristem.

Its subcellular location is the mitochondrion. The protein resides in the plastid. It localises to the chloroplast. It catalyses the reaction DNA(n) + a 2'-deoxyribonucleoside 5'-triphosphate = DNA(n+1) + diphosphate. With respect to regulation, not inhibited by aphidicolin. Functionally, in addition to polymerase activity, this DNA polymerase exhibits 5'-3' exonuclease activity. Required for DNA replication and accumulation in plastids and mitochondria. The chain is DNA polymerase I B, chloroplastic/mitochondrial (POLIB) from Arabidopsis thaliana (Mouse-ear cress).